Reading from the N-terminus, the 384-residue chain is 8-amino-7-oxononanoate synthase (384 aa).

Arg23 contacts substrate. 110 to 111 (GF) contributes to the pyridoxal 5'-phosphate binding site. His135 contributes to the substrate binding site. Pyridoxal 5'-phosphate is bound by residues Ser179, His206, and Thr232. Lys235 is modified (N6-(pyridoxal phosphate)lysine). Substrate is bound at residue Thr348.

It belongs to the class-II pyridoxal-phosphate-dependent aminotransferase family. BioF subfamily. In terms of assembly, homodimer. Pyridoxal 5'-phosphate serves as cofactor.

The enzyme catalyses 6-carboxyhexanoyl-[ACP] + L-alanine + H(+) = (8S)-8-amino-7-oxononanoate + holo-[ACP] + CO2. Its pathway is cofactor biosynthesis; biotin biosynthesis. Its function is as follows. Catalyzes the decarboxylative condensation of pimeloyl-[acyl-carrier protein] and L-alanine to produce 8-amino-7-oxononanoate (AON), [acyl-carrier protein], and carbon dioxide. The protein is 8-amino-7-oxononanoate synthase of Vibrio cholerae serotype O1 (strain ATCC 39315 / El Tor Inaba N16961).